A 257-amino-acid chain; its full sequence is Phosphonates import ATP-binding protein PhnC (257 aa).

The ABC transporter domain maps to 7–251; that stretch reads IQLKDVSKIY…VFTDIYNGGD (245 aa). 40 to 47 contributes to the ATP binding site; that stretch reads GLSGAGKS.

This sequence belongs to the ABC transporter superfamily. Phosphonates importer (TC 3.A.1.9.1) family. In terms of assembly, the complex is composed of two ATP-binding proteins (PhnC), two transmembrane proteins (PhnE) and a solute-binding protein (PhnD).

It localises to the cell membrane. The catalysed reaction is phosphonate(out) + ATP + H2O = phosphonate(in) + ADP + phosphate + H(+). Functionally, part of the ABC transporter complex PhnCDE involved in phosphonates import. Responsible for energy coupling to the transport system. In Lactobacillus acidophilus (strain ATCC 700396 / NCK56 / N2 / NCFM), this protein is Phosphonates import ATP-binding protein PhnC.